The sequence spans 243 residues: Probable transcriptional regulatory protein BB_0025 (243 aa).

It belongs to the TACO1 family.

The protein resides in the cytoplasm. The polypeptide is Probable transcriptional regulatory protein BB_0025 (Borreliella burgdorferi (strain ATCC 35210 / DSM 4680 / CIP 102532 / B31) (Borrelia burgdorferi)).